The following is a 148-amino-acid chain: Large ribosomal subunit protein bL9 (148 aa).

Belongs to the bacterial ribosomal protein bL9 family.

Binds to the 23S rRNA. The protein is Large ribosomal subunit protein bL9 of Desulfitobacterium hafniense (strain DSM 10664 / DCB-2).